Consider the following 574-residue polypeptide: Phosphate permease PHO89 (574 aa).

Residues 1–5 lie on the Extracellular side of the membrane; that stretch reads MALHQ. A helical membrane pass occupies residues 6–26; sequence FDYIFAIAMLFAFLDAFNIGA. The Cytoplasmic segment spans residues 27 to 43; that stretch reads NDVANSFASSISSRSLK. The chain crosses the membrane as a helical span at residues 44-64; that stretch reads YWQAMVLAGLCEFLGAVLAGA. Over 65–84 the chain is Extracellular; that stretch reads RVSGTIKNNIIDSSIFTNDP. A helical membrane pass occupies residues 85–105; it reads AVLMLTMTSALIGSSCWLTFA. At 106 to 117 the chain is on the cytoplasmic side; sequence TAIGMPVSTTHS. The helical transmembrane segment at 118-138 threads the bilayer; sequence IVGGTIGAGIAAGGANGVVWG. Residues 139-145 lie on the Extracellular side of the membrane; that stretch reads WSGVSQI. The chain crosses the membrane as a helical span at residues 146–166; that stretch reads IASWFIAPILAGAIAAIVFSI. Residues 167 to 184 are Cytoplasmic-facing; the sequence is SRFSVLEVKSLERSIKNA. A helical membrane pass occupies residues 185 to 205; sequence LLLVGVLVFATFSILTMLIVW. The Extracellular portion of the chain corresponds to 206–222; it reads KGSPNLHLDDLSETETA. The chain crosses the membrane as a helical span at residues 223 to 243; the sequence is VSIVLTGAIASIVYFIFFYPF. Residues 244 to 354 are Cytoplasmic-facing; sequence YRRKVLDQDW…SLLKQGPKKW (111 aa). The segment at 301–332 is disordered; the sequence is EDEENKAASNSNDSVKNKEDIQEVDLVRTETE. Residues 315–332 are compositionally biased toward basic and acidic residues; that stretch reads VKNKEDIQEVDLVRTETE. The chain crosses the membrane as a helical span at residues 355-375; it reads PLLFWLVISHGWTQDVIHAQV. Residues 376 to 398 are Extracellular-facing; the sequence is NDRDMLSGDLKGMYERSKFYDNR. A helical transmembrane segment spans residues 399–419; sequence VEYIYSVLQAITAATMSFAHG. Topologically, residues 420–447 are cytoplasmic; the sequence is ANDVANATGPLSAVYVIWKTNTIGAKSE. The chain crosses the membrane as a helical span at residues 448–468; sequence VPVWVLAYGGVALVIGCWTYG. Over 469-503 the chain is Extracellular; the sequence is YNIIKNLGNKMILQSPSRGFSIELAVAITTVMATQ. A helical membrane pass occupies residues 504–524; that stretch reads LGIPTSTTQIAVGGIVAVGLC. Topologically, residues 525–541 are cytoplasmic; sequence NKDLKSVNWRMVAWCYS. A helical membrane pass occupies residues 542-562; sequence GWFLTLPIAGLIAGIINGIIL. At 563 to 574 the chain is on the extracellular side; it reads NAPRFGVEYQMT.

Belongs to the inorganic phosphate transporter (PiT) (TC 2.A.20) family. In terms of assembly, forms homodimers and higher order homooligomers.

Its subcellular location is the cell membrane. The enzyme catalyses 2 Na(+)(out) + phosphate(out) = 2 Na(+)(in) + phosphate(in). Its activity is regulated as follows. Weakly stimulated by Li(+) and K(+). Inhibited by monensin. Inhibited by phosphonoacetic acid. Inhibited by methylphosphonate. Inhibited by dimethylphosphonate. Sodium-phosphate symporter. Active in early growth phase. The protein is Phosphate permease PHO89 (PHO89) of Saccharomyces cerevisiae (strain ATCC 204508 / S288c) (Baker's yeast).